Here is a 424-residue protein sequence, read N- to C-terminus: Histidine--tRNA ligase (424 aa).

The protein belongs to the class-II aminoacyl-tRNA synthetase family. As to quaternary structure, homodimer.

Its subcellular location is the cytoplasm. The catalysed reaction is tRNA(His) + L-histidine + ATP = L-histidyl-tRNA(His) + AMP + diphosphate + H(+). This is Histidine--tRNA ligase from Escherichia coli (strain SE11).